The following is a 378-amino-acid chain: MGAPMNPEFQLEGRAPGSLAGARIVVAMSGGVDSSVVAALAAASGAETIGVTLQLYDHGAAVGRTGSCCAGQDIRDARAVADRLGIAHYVFDYESRFRDSVIADFADEYAAGRTPIPCVRCNQGVKFTDLFGIARDLGADCLATGHYVRRVVGAGGRAELHRAADPARDQSYFLFATTRDQLDYLRFPLGAMPKPRVREIAAELGLGVAAKPDSQDICFVPDGDYASIVKRLRPEAAEEGEIVGLDGRVLGRHRGLIHFTVGQRRGIEIGGSPEPLYVVRLEPETKRLVVGPRRALAVSAAMLDDVNWIGEGYEGPLTAKVRSLAKPVPARFEDGAVRFDQPEYGVAPGQAAVLYAGDRVLGGGWIRATVPAELAVAA.

Residues 27–34 (AMSGGVDS) and Leu53 contribute to the ATP site. The active-site Nucleophile is Cys121. Cys121 and Cys218 form a disulfide bridge. Gly145 serves as a coordination point for ATP. The tract at residues 168–170 (RDQ) is interaction with tRNA. The active-site Cysteine persulfide intermediate is Cys218.

The protein belongs to the MnmA/TRMU family.

It localises to the cytoplasm. The enzyme catalyses S-sulfanyl-L-cysteinyl-[protein] + uridine(34) in tRNA + AH2 + ATP = 2-thiouridine(34) in tRNA + L-cysteinyl-[protein] + A + AMP + diphosphate + H(+). Functionally, catalyzes the 2-thiolation of uridine at the wobble position (U34) of tRNA, leading to the formation of s(2)U34. This chain is tRNA-specific 2-thiouridylase MnmA, found in Rhizorhabdus wittichii (strain DSM 6014 / CCUG 31198 / JCM 15750 / NBRC 105917 / EY 4224 / RW1) (Sphingomonas wittichii).